The following is a 438-amino-acid chain: MSETRSVSMPAADAPTVDAPWPVSVLSGKIKGWIDRLGTAWVEGEITQWGGSGGNVYGKLKDLDVDATISFTVWSSVRAKIPADLGQGARVVALVKPNYWVKGGTLTMQVLEMRHVGLGDLLERLERLRQTLRAEGLFDADRKRRLPFLPGCIGLITGKDSDAEKDVLRNAQLRWPSVRFRVVHTAVQGDRAAGEVTRAIGVLDEDPEVDVIVIARGGGDFQNLLVFSDEKLVRTAAACRTPLVSAIGHEADRPLLDDVADLRASTPTDAAKRVVPDVSEELSRVQQARARIGMRLTSQVRGEIDRIEQLRSRPVLSSTAWIVDSRAEELGRYIARSAELAGRVVERGMQQTSELSRQLRTLSPQHVLDRGYAIVQTADGSALRAPADAPDGTGLALRLAAGALGATSTGPTDDIPSSAARLPSSPAPDARPASGAES.

A disordered region spans residues 405–438 (GATSTGPTDDIPSSAARLPSSPAPDARPASGAES).

Belongs to the XseA family. Heterooligomer composed of large and small subunits.

It localises to the cytoplasm. The enzyme catalyses Exonucleolytic cleavage in either 5'- to 3'- or 3'- to 5'-direction to yield nucleoside 5'-phosphates.. Functionally, bidirectionally degrades single-stranded DNA into large acid-insoluble oligonucleotides, which are then degraded further into small acid-soluble oligonucleotides. This chain is Exodeoxyribonuclease 7 large subunit, found in Clavibacter michiganensis subsp. michiganensis (strain NCPPB 382).